Consider the following 421-residue polypeptide: Subtilisin-like protease 2 (421 aa).

The signal sequence occupies residues 1–16 (MQLLNFGLLLLPFVAG). Positions 17–122 (DLAPQPEPLL…VHPDQHVYLA (106 aa)) are excised as a propeptide. The Inhibitor I9 domain maps to 36–122 (QYIVTLKEGL…VHPDQHVYLA (87 aa)). Positions 131 to 421 (RWGLGYMSSK…ERKFTLPKYF (291 aa)) constitute a Peptidase S8 domain. Residues D169 and H201 each act as charge relay system in the active site. N248, N261, and N348 each carry an N-linked (GlcNAc...) asparagine glycan. Catalysis depends on S357, which acts as the Charge relay system. N388 is a glycosylation site (N-linked (GlcNAc...) asparagine).

It belongs to the peptidase S8 family.

The protein localises to the secreted. Secreted subtilisin-like serine protease with keratinolytic activity that contributes to pathogenicity. In Trichophyton equinum (Horse ringworm fungus), this protein is Subtilisin-like protease 2 (SUB2).